The sequence spans 215 residues: tRNA (guanine-N(7)-)-methyltransferase (215 aa).

Positions 44, 69, 96, and 118 each coordinate S-adenosyl-L-methionine. Aspartate 118 is an active-site residue. Substrate contacts are provided by residues lysine 122, aspartate 154, and 191–194 (TEYE).

Belongs to the class I-like SAM-binding methyltransferase superfamily. TrmB family.

The enzyme catalyses guanosine(46) in tRNA + S-adenosyl-L-methionine = N(7)-methylguanosine(46) in tRNA + S-adenosyl-L-homocysteine. It participates in tRNA modification; N(7)-methylguanine-tRNA biosynthesis. In terms of biological role, catalyzes the formation of N(7)-methylguanine at position 46 (m7G46) in tRNA. This chain is tRNA (guanine-N(7)-)-methyltransferase, found in Exiguobacterium sp. (strain ATCC BAA-1283 / AT1b).